The sequence spans 231 residues: Large ribosomal subunit protein uL1 (231 aa).

Belongs to the universal ribosomal protein uL1 family. In terms of assembly, part of the 50S ribosomal subunit.

Its function is as follows. Binds directly to 23S rRNA. The L1 stalk is quite mobile in the ribosome, and is involved in E site tRNA release. Functionally, protein L1 is also a translational repressor protein, it controls the translation of the L11 operon by binding to its mRNA. The sequence is that of Large ribosomal subunit protein uL1 from Mycoplasmopsis agalactiae (strain NCTC 10123 / CIP 59.7 / PG2) (Mycoplasma agalactiae).